The chain runs to 151 residues: Ribonuclease H (151 aa).

The 141-residue stretch at 1–141 (MQEVTVYSDG…ADALANKGVE (141 aa)) folds into the RNase H type-1 domain. Mg(2+) is bound by residues Asp-9, Glu-47, Asp-69, and Asp-133.

It belongs to the RNase H family. In terms of assembly, monomer. Requires Mg(2+) as cofactor.

Its subcellular location is the cytoplasm. It catalyses the reaction Endonucleolytic cleavage to 5'-phosphomonoester.. Its function is as follows. Endonuclease that specifically degrades the RNA of RNA-DNA hybrids. The polypeptide is Ribonuclease H (Ralstonia nicotianae (strain ATCC BAA-1114 / GMI1000) (Ralstonia solanacearum)).